Here is a 296-residue protein sequence, read N- to C-terminus: NAD kinase (296 aa).

Catalysis depends on aspartate 72, which acts as the Proton acceptor. NAD(+) contacts are provided by residues 72-73 (DG), 146-147 (ND), arginine 157, lysine 174, aspartate 176, 187-192 (TAYALS), and glutamine 247.

This sequence belongs to the NAD kinase family. It depends on a divalent metal cation as a cofactor.

It localises to the cytoplasm. The enzyme catalyses NAD(+) + ATP = ADP + NADP(+) + H(+). Involved in the regulation of the intracellular balance of NAD and NADP, and is a key enzyme in the biosynthesis of NADP. Catalyzes specifically the phosphorylation on 2'-hydroxyl of the adenosine moiety of NAD to yield NADP. This is NAD kinase from Pseudomonas fluorescens (strain ATCC BAA-477 / NRRL B-23932 / Pf-5).